The chain runs to 141 residues: Ly6/PLAUR domain-containing protein 1 (141 aa).

The first 20 residues, 1 to 20 (MWVLGIAATFCGLFLLPGFA), serve as a signal peptide directing secretion. 6 disulfide bridges follow: cysteine 25–cysteine 54, cysteine 28–cysteine 37, cysteine 46–cysteine 71, cysteine 77–cysteine 100, cysteine 88–cysteine 97, and cysteine 101–cysteine 106. Positions 25–107 (CYQCEEFQLN…ISCCNTPLCN (83 aa)) constitute a UPAR/Ly6 domain. Asparagine 45 carries an N-linked (GlcNAc...) asparagine glycan. A lipid anchor (GPI-anchor amidated serine) is attached at serine 117. The propeptide at 118–141 (ASALRPGLRTTILFLKLALFSAHC) is removed in mature form.

In terms of assembly, interacts with CHRNA4 and nAChRs containing alpha-4:beta-2 (CHRNA4:CHRNB2) and alpha-7 (CHRNA7) subunits.

The protein localises to the cell membrane. Its function is as follows. Believed to act as a modulator of nicotinic acetylcholine receptors (nAChRs) activity. In vitro increases receptor desensitization and decreases affinity for ACh of alpha-4:beta-2-containing nAChRs. May play a role in the intracellular trafficking of alpha-4:beta-2 and alpha-7-containing nAChRs and may inhibit their expression at the cell surface. May be involved in the control of anxiety. The protein is Ly6/PLAUR domain-containing protein 1 (LYPD1) of Homo sapiens (Human).